The primary structure comprises 493 residues: Non-structural protein 1 (493 aa).

The interval 1–81 (MATFKDACFH…CFLDNEPHLL (81 aa)) is RNA-binding. A zinc-binding domain region spans residues 42–79 (CIECCQLTELTFCHGCSLAHVCQWCIQNKRCFLDNEPH). The important for cytoskeleton localization stretch occupies residues 82-176 (KLRTFESPIT…CINLPYRIVN (95 aa)). The interval 318–493 (NVSQCRWCNV…LISDSEDDDQ (176 aa)) is interaction with host IRF3. The pLxIS motif signature appears at 483–486 (LLIS).

This sequence belongs to the rotavirus NSP1 family. Interacts (via C-terminus) with host IRF3; this interaction leads to IRF3 degradation. Interacts with host IRF7; this interaction leads to IRF7 degradation. Interacts with host CUL1 and CUL3.

The protein localises to the host cytoplasm. Its subcellular location is the host cytoskeleton. Plays a role in the inhibition of host innate immunity by inducing the degradation of key host factors required to activate interferon production such as IRF3, IRF5 or IRF7. Associates with components of cullin RING ligases (CRLs) including CUL1 or CUL3, which are essential multisubunit ubiquitination complexes, to modulate their activities. This is Non-structural protein 1 from Rotavirus A (isolate RVA/Dog/United States/K9/1981/G3P5A[3]) (RV-A).